A 107-amino-acid polypeptide reads, in one-letter code: MTKNKNLEFIQNAIKKNKVVLFMKGTKEMPACGFSGTVVAILNKLGVEFSDINVLFDTALREDLKKFSDWPTFPQLYINGVLVGGCDIAKELYQNGELEKMLKDVVV.

In terms of domain architecture, Glutaredoxin spans 7–107; that stretch reads LEFIQNAIKK…LEKMLKDVVV (101 aa). Lysine 24 provides a ligand contact to glutathione. Cysteine 32 serves as a coordination point for [2Fe-2S] cluster. Residues arginine 61, phenylalanine 73, and 86–87 each bind glutathione; that span reads CD.

The protein belongs to the glutaredoxin family. Monothiol subfamily.

This chain is Probable monothiol glutaredoxin 2 (grxC2), found in Rickettsia prowazekii (strain Madrid E).